The sequence spans 327 residues: Voltage-dependent calcium channel gamma-4 subunit (327 aa).

Residues 1–9 lie on the Cytoplasmic side of the membrane; that stretch reads MVRCDRGLQ. The chain crosses the membrane as a helical span at residues 10-30; sequence MLLTTAGAFAAFSLMAIAIGT. Residues 31 to 107 are Extracellular-facing; sequence DYWLYSSAHI…EYLLRIVRAS (77 aa). N-linked (GlcNAc...) asparagine glycosylation is found at N42 and N45. Residues 108–128 form a helical membrane-spanning segment; sequence SVFPILSTILLLLGGLCIGAG. Over 129–136 the chain is Cytoplasmic; that stretch reads RIYSRKNN. The helical transmembrane segment at 137 to 157 threads the bilayer; sequence IVLSAGILFVAAGLSNIIGII. At 158–186 the chain is on the extracellular side; the sequence is VYISSNTGDPSDKRDEDKKNHYNYGWSFY. Residues 187 to 207 traverse the membrane as a helical segment; that stretch reads FGALSFIVAETVGVLAVNIYI. At 208–327 the chain is on the cytoplasmic side; it reads EKNKELRFKT…SMLNRRTTPV (120 aa). The interval 235–261 is disordered; it reads SYRYRRRRSRSSSRSTEASPSRDVSPM. The span at 246–256 shows a compositional bias: low complexity; it reads SSRSTEASPSR. Residue S259 is modified to Phosphoserine.

Belongs to the PMP-22/EMP/MP20 family. CACNG subfamily. As to quaternary structure, interacts with CACNA1C. Identified in a complex with the L-type calcium channel subunits CACNA1C, CACNA2D1 and either CACNB1 or CACNB2. Acts as an auxiliary subunit for AMPA-selective glutamate receptors (AMPARs). Interacts with GRIA1. In terms of tissue distribution, detected in heart left ventricle.

Its subcellular location is the cell membrane. Regulates the activity of L-type calcium channels that contain CACNA1C as pore-forming subunit. Regulates the trafficking and gating properties of AMPA-selective glutamate receptors (AMPARs), including GRIA1 and GRIA4. Promotes their targeting to the cell membrane and synapses and modulates their gating properties by slowing their rates of activation, deactivation and desensitization and by mediating their resensitization. In Homo sapiens (Human), this protein is Voltage-dependent calcium channel gamma-4 subunit (CACNG4).